Consider the following 284-residue polypeptide: Diaminopimelate epimerase (284 aa).

Residues Asn20, Gln53, and Asn73 each coordinate substrate. The Proton donor role is filled by Cys82. Substrate is bound by residues Gly83 to Asn84, Asn167, Asn200, and Glu218 to Arg219. Residue Cys227 is the Proton acceptor of the active site. Gly228–Ser229 contacts substrate.

Belongs to the diaminopimelate epimerase family. As to quaternary structure, homodimer.

It is found in the cytoplasm. The enzyme catalyses (2S,6S)-2,6-diaminopimelate = meso-2,6-diaminopimelate. It functions in the pathway amino-acid biosynthesis; L-lysine biosynthesis via DAP pathway; DL-2,6-diaminopimelate from LL-2,6-diaminopimelate: step 1/1. Its function is as follows. Catalyzes the stereoinversion of LL-2,6-diaminopimelate (L,L-DAP) to meso-diaminopimelate (meso-DAP), a precursor of L-lysine and an essential component of the bacterial peptidoglycan. The polypeptide is Diaminopimelate epimerase (Xylella fastidiosa (strain 9a5c)).